Consider the following 161-residue polypeptide: Transcription elongation factor GreA (161 aa).

The stretch at 8–28 (LTQEGFKQLEKELENLIQVKR) forms a coiled coil.

It belongs to the GreA/GreB family.

Necessary for efficient RNA polymerase transcription elongation past template-encoded arresting sites. The arresting sites in DNA have the property of trapping a certain fraction of elongating RNA polymerases that pass through, resulting in locked ternary complexes. Cleavage of the nascent transcript by cleavage factors such as GreA or GreB allows the resumption of elongation from the new 3'terminus. GreA releases sequences of 2 to 3 nucleotides. This Mycoplasma genitalium (strain ATCC 33530 / DSM 19775 / NCTC 10195 / G37) (Mycoplasmoides genitalium) protein is Transcription elongation factor GreA.